We begin with the raw amino-acid sequence, 722 residues long: Polyribonucleotide nucleotidyltransferase (722 aa).

The Mg(2+) site is built by D495 and D501. The region spanning 562–621 (PRLLSFRIDPELIGTVIGPGGRTIKGITERTNTKIDIEDGGIVTIASHDGAAAEEAQRII) is the KH domain. The region spanning 631-699 (GEIFPGSITR…NRGRINLTLR (69 aa)) is the S1 motif domain. Residues 700 to 722 (GVSQNGGMSNYPEPTPTPVAPLT) are disordered. Residues 712–722 (EPTPTPVAPLT) show a composition bias toward pro residues.

This sequence belongs to the polyribonucleotide nucleotidyltransferase family. Mg(2+) serves as cofactor.

The protein resides in the cytoplasm. It carries out the reaction RNA(n+1) + phosphate = RNA(n) + a ribonucleoside 5'-diphosphate. Involved in mRNA degradation. Catalyzes the phosphorolysis of single-stranded polyribonucleotides processively in the 3'- to 5'-direction. This chain is Polyribonucleotide nucleotidyltransferase, found in Prochlorococcus marinus (strain NATL2A).